We begin with the raw amino-acid sequence, 164 residues long: NADH-quinone oxidoreductase subunit I (164 aa).

4Fe-4S ferredoxin-type domains are found at residues 54-84 and 95-124; these read LRRY…IEAG and VRYD…EGPN. [4Fe-4S] cluster contacts are provided by Cys64, Cys67, Cys70, Cys74, Cys104, Cys107, Cys110, and Cys114.

The protein belongs to the complex I 23 kDa subunit family. NDH-1 is composed of 14 different subunits. Subunits NuoA, H, J, K, L, M, N constitute the membrane sector of the complex. [4Fe-4S] cluster is required as a cofactor.

It localises to the cell inner membrane. It catalyses the reaction a quinone + NADH + 5 H(+)(in) = a quinol + NAD(+) + 4 H(+)(out). In terms of biological role, NDH-1 shuttles electrons from NADH, via FMN and iron-sulfur (Fe-S) centers, to quinones in the respiratory chain. The immediate electron acceptor for the enzyme in this species is believed to be ubiquinone. Couples the redox reaction to proton translocation (for every two electrons transferred, four hydrogen ions are translocated across the cytoplasmic membrane), and thus conserves the redox energy in a proton gradient. The polypeptide is NADH-quinone oxidoreductase subunit I (Mesorhizobium japonicum (strain LMG 29417 / CECT 9101 / MAFF 303099) (Mesorhizobium loti (strain MAFF 303099))).